Reading from the N-terminus, the 264-residue chain is tRNA (guanine-N(1)-)-methyltransferase (264 aa).

S-adenosyl-L-methionine-binding positions include glycine 125 and leucine 145 to leucine 150.

The protein belongs to the RNA methyltransferase TrmD family. As to quaternary structure, homodimer.

It is found in the cytoplasm. The enzyme catalyses guanosine(37) in tRNA + S-adenosyl-L-methionine = N(1)-methylguanosine(37) in tRNA + S-adenosyl-L-homocysteine + H(+). Specifically methylates guanosine-37 in various tRNAs. The polypeptide is tRNA (guanine-N(1)-)-methyltransferase (Burkholderia ambifaria (strain MC40-6)).